Reading from the N-terminus, the 124-residue chain is Large ribosomal subunit protein bL12 (124 aa).

It belongs to the bacterial ribosomal protein bL12 family. As to quaternary structure, homodimer. Part of the ribosomal stalk of the 50S ribosomal subunit. Forms a multimeric L10(L12)X complex, where L10 forms an elongated spine to which 2 to 4 L12 dimers bind in a sequential fashion. Binds GTP-bound translation factors.

Its function is as follows. Forms part of the ribosomal stalk which helps the ribosome interact with GTP-bound translation factors. Is thus essential for accurate translation. The protein is Large ribosomal subunit protein bL12 of Borreliella burgdorferi (strain ZS7) (Borrelia burgdorferi).